The sequence spans 634 residues: MTEAENRVTLGFEAEVKQLLHLMIHSLYGNKEIFLRELISNASDAADKLRFSALGNDALYEGDSRLRVRIEFDKAARTLSISDNGIGMTREEVQHNIGTIARSGTRHFFESLTGDEAKDSQLIGQFGVGFYSAFIVADKVVLETRKAGVPAEEGARWESSGEGSYTLETLTRPERGTRVTLHLREGEDEFLDGWKLRAIIRKFSDHISLPIEMKRETGEPKEGEEAPAEVWETVNSASALWAKNRDEITDEAYDEFYKHVSHDFQEPLARVHSRVEGTNEYTLLLYIPKHAPFDLWDRDSKRGVKLYVRKVFIMEDSDKLMPRYLRFVRGVIDSDSLPLNVSREILQENKQLEKIRGGAVKKVLGLLEDLANNEPEKYQAFWKEFGQVLKEGLIEDFANKDRLAKLLRFSSTHTDSEEQTVTLDEYVSRMKEGQDKIYFVSAESFGAARNSPHLEIFRKKDIEVLLLSDRIDEWLVSYLTEYEGKPLQSVARGDLDLGKLEGEEEKAEAAAEKEAFAPLTERLKKALEAKVNDVRLSHRLTDSPACLISESYGMSRTMERIMKSAGQNIPGSKPILEINPHHGLIARLNTEADQTRFQDLASLLLDQAVLAEGGQLDDPAEFVHKLNGLLQSLL.

The tract at residues 1–343 (MTEAENRVTL…SDSLPLNVSR (343 aa)) is a; substrate-binding. Positions 344-560 (EILQENKQLE…SYGMSRTMER (217 aa)) are b. The tract at residues 561–634 (IMKSAGQNIP…KLNGLLQSLL (74 aa)) is c.

The protein belongs to the heat shock protein 90 family. As to quaternary structure, homodimer.

It localises to the cytoplasm. In terms of biological role, molecular chaperone. Has ATPase activity. The polypeptide is Chaperone protein HtpG (Methylococcus capsulatus (strain ATCC 33009 / NCIMB 11132 / Bath)).